A 119-amino-acid polypeptide reads, in one-letter code: Large ribosomal subunit protein bL20 (119 aa).

It belongs to the bacterial ribosomal protein bL20 family.

Binds directly to 23S ribosomal RNA and is necessary for the in vitro assembly process of the 50S ribosomal subunit. It is not involved in the protein synthesizing functions of that subunit. The chain is Large ribosomal subunit protein bL20 from Bordetella petrii (strain ATCC BAA-461 / DSM 12804 / CCUG 43448).